Here is a 118-residue protein sequence, read N- to C-terminus: Large ribosomal subunit protein bL20 (118 aa).

Belongs to the bacterial ribosomal protein bL20 family.

Functionally, binds directly to 23S ribosomal RNA and is necessary for the in vitro assembly process of the 50S ribosomal subunit. It is not involved in the protein synthesizing functions of that subunit. This Thermus thermophilus (strain ATCC BAA-163 / DSM 7039 / HB27) protein is Large ribosomal subunit protein bL20.